The sequence spans 225 residues: tRNA (guanine-N(1)-)-methyltransferase (225 aa).

S-adenosyl-L-methionine contacts are provided by residues Gly110 and 130 to 135; that span reads VGDYVL.

The protein belongs to the RNA methyltransferase TrmD family. As to quaternary structure, homodimer.

The protein resides in the cytoplasm. The catalysed reaction is guanosine(37) in tRNA + S-adenosyl-L-methionine = N(1)-methylguanosine(37) in tRNA + S-adenosyl-L-homocysteine + H(+). Functionally, specifically methylates guanosine-37 in various tRNAs. The sequence is that of tRNA (guanine-N(1)-)-methyltransferase from Neorickettsia sennetsu (strain ATCC VR-367 / Miyayama) (Ehrlichia sennetsu).